The following is a 382-amino-acid chain: Anhydro-N-acetylmuramic acid kinase (382 aa).

Position 9–16 (9–16) interacts with ATP; the sequence is GTSLDGID.

It belongs to the anhydro-N-acetylmuramic acid kinase family.

It carries out the reaction 1,6-anhydro-N-acetyl-beta-muramate + ATP + H2O = N-acetyl-D-muramate 6-phosphate + ADP + H(+). The protein operates within amino-sugar metabolism; 1,6-anhydro-N-acetylmuramate degradation. Its pathway is cell wall biogenesis; peptidoglycan recycling. Catalyzes the specific phosphorylation of 1,6-anhydro-N-acetylmuramic acid (anhMurNAc) with the simultaneous cleavage of the 1,6-anhydro ring, generating MurNAc-6-P. Is required for the utilization of anhMurNAc either imported from the medium or derived from its own cell wall murein, and thus plays a role in cell wall recycling. In Bacillus cereus (strain AH820), this protein is Anhydro-N-acetylmuramic acid kinase.